Here is a 386-residue protein sequence, read N- to C-terminus: NADH-ubiquinone oxidoreductase chain 4 (386 aa).

11 helical membrane-spanning segments follow: residues 8–28 (SEFH…YFLF), 37–57 (WPLS…LTFT), 61–81 (FILF…LILG), 91–111 (ASYY…FIII), 133–153 (IFLL…AHIW), 167–187 (MVLA…VQVL), 189–209 (IYSE…SCLI), 219–239 (LIAY…LMSC), 247–267 (ILMM…SYLF), 283–303 (ISLF…NMGL), and 315–335 (FFIG…ILCF).

This sequence belongs to the complex I subunit 4 family.

It is found in the mitochondrion membrane. It carries out the reaction a ubiquinone + NADH + 5 H(+)(in) = a ubiquinol + NAD(+) + 4 H(+)(out). Core subunit of the mitochondrial membrane respiratory chain NADH dehydrogenase (Complex I) that is believed to belong to the minimal assembly required for catalysis. Complex I functions in the transfer of electrons from NADH to the respiratory chain. The immediate electron acceptor for the enzyme is believed to be ubiquinone. The polypeptide is NADH-ubiquinone oxidoreductase chain 4 (ND4) (Artemia franciscana (Brine shrimp)).